Consider the following 261-residue polypeptide: NAD(P)H-quinone oxidoreductase subunit K, chloroplastic (261 aa).

[4Fe-4S] cluster-binding residues include cysteine 43, cysteine 44, cysteine 108, and cysteine 139.

Belongs to the complex I 20 kDa subunit family. NDH is composed of at least 16 different subunits, 5 of which are encoded in the nucleus. [4Fe-4S] cluster is required as a cofactor.

The protein localises to the plastid. It is found in the chloroplast thylakoid membrane. The catalysed reaction is a plastoquinone + NADH + (n+1) H(+)(in) = a plastoquinol + NAD(+) + n H(+)(out). It carries out the reaction a plastoquinone + NADPH + (n+1) H(+)(in) = a plastoquinol + NADP(+) + n H(+)(out). Its function is as follows. NDH shuttles electrons from NAD(P)H:plastoquinone, via FMN and iron-sulfur (Fe-S) centers, to quinones in the photosynthetic chain and possibly in a chloroplast respiratory chain. The immediate electron acceptor for the enzyme in this species is believed to be plastoquinone. Couples the redox reaction to proton translocation, and thus conserves the redox energy in a proton gradient. This is NAD(P)H-quinone oxidoreductase subunit K, chloroplastic from Cycas taitungensis (Prince sago).